Consider the following 224-residue polypeptide: UPF0758 protein Csal_2972 (224 aa).

The MPN domain occupies 102-224 (ALTSPTLVRR…VVSFAERGWL (123 aa)). 3 residues coordinate Zn(2+): histidine 173, histidine 175, and aspartate 186. Positions 173 to 186 (HNHPSGVAEPSDAD) match the JAMM motif motif.

This sequence belongs to the UPF0758 family.

The chain is UPF0758 protein Csal_2972 from Chromohalobacter salexigens (strain ATCC BAA-138 / DSM 3043 / CIP 106854 / NCIMB 13768 / 1H11).